Here is a 101-residue protein sequence, read N- to C-terminus: Protein RADIALIS-like 2 (101 aa).

An SANT domain is found at 9 to 64 (YGSGSWTVKQNKAFERALAVYDQDTPDRWHNVARAVGGKTPEEAKRQYDLLVRDIE). The segment at 69-101 (GHVPFPDYKTTTGNSNRGRLRDEEKRMRSMKLQ) is disordered.

Expressed in the funiculus of ovules and in embryos. In young ovules, expression is observed in the adaxial side of the funiculus (the stalk connecting the embryo sac to the placenta). Also expressed in heart-stage embryos, in the cortex and endodermis of the hypocotyl region but not in the cotyledons, shoot and root apical meristems, provasculature or epidermis. Not detected in young seedlings, mature roots or in young floral primordia.

It localises to the nucleus. Its function is as follows. Probable transcription factor. Required for female gametophyte development. In Arabidopsis thaliana (Mouse-ear cress), this protein is Protein RADIALIS-like 2 (RL2).